Consider the following 386-residue polypeptide: S-adenosylmethionine synthase (386 aa).

His-16 provides a ligand contact to ATP. Asp-18 contacts Mg(2+). Glu-44 contacts K(+). Glu-57 and Gln-100 together coordinate L-methionine. A flexible loop region spans residues 100 to 110 (QSPDINQGVDR). Residues 164-166 (DGK), 230-231 (KF), Asp-239, 245-246 (RK), Ala-262, and Lys-266 contribute to the ATP site. Asp-239 contributes to the L-methionine binding site. Lys-270 is an L-methionine binding site.

Belongs to the AdoMet synthase family. Homotetramer; dimer of dimers. Mg(2+) serves as cofactor. It depends on K(+) as a cofactor.

The protein resides in the cytoplasm. The catalysed reaction is L-methionine + ATP + H2O = S-adenosyl-L-methionine + phosphate + diphosphate. The protein operates within amino-acid biosynthesis; S-adenosyl-L-methionine biosynthesis; S-adenosyl-L-methionine from L-methionine: step 1/1. Catalyzes the formation of S-adenosylmethionine (AdoMet) from methionine and ATP. The overall synthetic reaction is composed of two sequential steps, AdoMet formation and the subsequent tripolyphosphate hydrolysis which occurs prior to release of AdoMet from the enzyme. This is S-adenosylmethionine synthase from Wolinella succinogenes (strain ATCC 29543 / DSM 1740 / CCUG 13145 / JCM 31913 / LMG 7466 / NCTC 11488 / FDC 602W) (Vibrio succinogenes).